Reading from the N-terminus, the 334-residue chain is tRNA dimethylallyltransferase (334 aa).

22 to 29 serves as a coordination point for ATP; sequence GPTASGKT. 24–29 provides a ligand contact to substrate; the sequence is TASGKT.

This sequence belongs to the IPP transferase family. Monomer. Mg(2+) serves as cofactor.

The catalysed reaction is adenosine(37) in tRNA + dimethylallyl diphosphate = N(6)-dimethylallyladenosine(37) in tRNA + diphosphate. Catalyzes the transfer of a dimethylallyl group onto the adenine at position 37 in tRNAs that read codons beginning with uridine, leading to the formation of N6-(dimethylallyl)adenosine (i(6)A). The sequence is that of tRNA dimethylallyltransferase from Rhodopirellula baltica (strain DSM 10527 / NCIMB 13988 / SH1).